The following is a 1024-amino-acid chain: Beta-galactosidase (1024 aa).

The substrate site is built by Asn-103 and Asp-202. Asp-202 is a Na(+) binding site. Mg(2+) is bound by residues Glu-417, His-419, and Glu-462. Substrate is bound by residues Glu-462 and 538–541; that span reads EYAH. Glu-462 serves as the catalytic Proton donor. Glu-538 functions as the Nucleophile in the catalytic mechanism. Asn-598 is a binding site for Mg(2+). The Na(+) site is built by Phe-602 and Asn-605. Asn-605 and Trp-1000 together coordinate substrate.

It belongs to the glycosyl hydrolase 2 family. As to quaternary structure, homotetramer. Mg(2+) is required as a cofactor. The cofactor is Na(+).

The catalysed reaction is Hydrolysis of terminal non-reducing beta-D-galactose residues in beta-D-galactosides.. The chain is Beta-galactosidase from Escherichia coli (strain UTI89 / UPEC).